We begin with the raw amino-acid sequence, 237 residues long: Ribose-5-phosphate isomerase A (237 aa).

Substrate is bound by residues 30–33 (SGST), 87–90 (DGAD), and 100–103 (KGGG). Glutamate 109 functions as the Proton acceptor in the catalytic mechanism. Substrate is bound at residue lysine 127.

This sequence belongs to the ribose 5-phosphate isomerase family. As to quaternary structure, homodimer.

It carries out the reaction aldehydo-D-ribose 5-phosphate = D-ribulose 5-phosphate. It functions in the pathway carbohydrate degradation; pentose phosphate pathway; D-ribose 5-phosphate from D-ribulose 5-phosphate (non-oxidative stage): step 1/1. In terms of biological role, catalyzes the reversible conversion of ribose-5-phosphate to ribulose 5-phosphate. The polypeptide is Ribose-5-phosphate isomerase A (Prochlorococcus marinus (strain SARG / CCMP1375 / SS120)).